The following is a 325-amino-acid chain: GMP reductase (325 aa).

Catalysis depends on cysteine 173, which acts as the Thioimidate intermediate. Residue 202 to 225 (IIADGGIHEHGDIAKSIRFGATMV) coordinates NADP(+).

It belongs to the IMPDH/GMPR family. GuaC type 2 subfamily.

The enzyme catalyses IMP + NH4(+) + NADP(+) = GMP + NADPH + 2 H(+). Its function is as follows. Catalyzes the irreversible NADPH-dependent deamination of GMP to IMP. It functions in the conversion of nucleobase, nucleoside and nucleotide derivatives of G to A nucleotides, and in maintaining the intracellular balance of A and G nucleotides. This Albidiferax ferrireducens (strain ATCC BAA-621 / DSM 15236 / T118) (Rhodoferax ferrireducens) protein is GMP reductase.